We begin with the raw amino-acid sequence, 102 residues long: Salivary thrombin inhibitor anophelin (102 aa).

Residues 1–21 (MATKLIVIAFLCAALIAVVQS) form the signal peptide. The disordered stretch occupies residues 25–102 (YAQGEEPTYD…SDSSSESTEH (78 aa)). Over residues 59–69 (SQLTEYANTAQ) the composition is skewed to polar residues. The interval 70 to 73 (DPGR) is blocks active site cleft of host thrombin in a reverse direction compared to substrates. Residues 80–90 (QANSNNGDQLP) are compositionally biased toward polar residues. Residues 91–102 (SQSDSSSESTEH) are compositionally biased toward low complexity.

It belongs to the anophelin family. In terms of assembly, interacts with human F2 (thrombin); the interaction results in thrombin inhibition.

The protein resides in the secreted. In terms of biological role, salivary protein with anticoagulant activity that inhibits host thrombin (F2). The chain is Salivary thrombin inhibitor anophelin from Anopheles funestus (African malaria mosquito).